The following is a 473-amino-acid chain: Ribonuclease Y (473 aa).

Residues 4-24 (LIAFIILLILFVLLITIVPVV) traverse the membrane as a helical segment. In terms of domain architecture, KH spans 158 to 218 (SLFNIDIIDE…IRREIARIVM (61 aa)). Residues 285–378 (ILSHSLEVAE…VKIVDTLSAA (94 aa)) enclose the HD domain.

It belongs to the RNase Y family.

The protein localises to the cell membrane. Its function is as follows. Endoribonuclease that initiates mRNA decay. The protein is Ribonuclease Y of Ureaplasma parvum serovar 3 (strain ATCC 27815 / 27 / NCTC 11736).